The following is a 320-amino-acid chain: ATP-dependent 6-phosphofructokinase (320 aa).

Residue Gly-12 coordinates ATP. 22 to 26 is a binding site for ADP; sequence RAVVR. ATP contacts are provided by residues 73–74 and 103–106; these read RF and GDGS. Asp-104 is a Mg(2+) binding site. Substrate is bound at residue 126 to 128; it reads TID. Asp-128 functions as the Proton acceptor in the catalytic mechanism. Arg-155 contributes to the ADP binding site. Substrate is bound by residues Arg-163 and 170 to 172; that span reads MGR. ADP contacts are provided by residues 186-188 and 214-216; these read GAE and KNH. Substrate-binding positions include Glu-223, Arg-244, and 250 to 253; that span reads HIQR.

This sequence belongs to the phosphofructokinase type A (PFKA) family. ATP-dependent PFK group I subfamily. Prokaryotic clade 'B1' sub-subfamily. Homotetramer. It depends on Mg(2+) as a cofactor.

It is found in the cytoplasm. The catalysed reaction is beta-D-fructose 6-phosphate + ATP = beta-D-fructose 1,6-bisphosphate + ADP + H(+). It participates in carbohydrate degradation; glycolysis; D-glyceraldehyde 3-phosphate and glycerone phosphate from D-glucose: step 3/4. Allosterically activated by ADP and other diphosphonucleosides, and allosterically inhibited by phosphoenolpyruvate. Its function is as follows. Catalyzes the phosphorylation of D-fructose 6-phosphate to fructose 1,6-bisphosphate by ATP, the first committing step of glycolysis. The sequence is that of ATP-dependent 6-phosphofructokinase from Teredinibacter turnerae (strain ATCC 39867 / T7901).